The sequence spans 219 residues: Protein-L-isoaspartate O-methyltransferase (219 aa).

The active site involves Ser-67.

It belongs to the methyltransferase superfamily. L-isoaspartyl/D-aspartyl protein methyltransferase family.

It localises to the cytoplasm. It catalyses the reaction [protein]-L-isoaspartate + S-adenosyl-L-methionine = [protein]-L-isoaspartate alpha-methyl ester + S-adenosyl-L-homocysteine. Catalyzes the methyl esterification of L-isoaspartyl residues in peptides and proteins that result from spontaneous decomposition of normal L-aspartyl and L-asparaginyl residues. It plays a role in the repair and/or degradation of damaged proteins. This chain is Protein-L-isoaspartate O-methyltransferase, found in Cereibacter sphaeroides (strain ATCC 17029 / ATH 2.4.9) (Rhodobacter sphaeroides).